We begin with the raw amino-acid sequence, 652 residues long: ATP-dependent zinc metalloprotease FtsH 2 (652 aa).

Topologically, residues 1–6 are cytoplasmic; that stretch reads MNKYRR. A helical membrane pass occupies residues 7–27; it reads GLALGALALAVFILIGVGISM. At 28–108 the chain is on the extracellular side; that stretch reads RATPQPVNLT…PAGNGAISAD (81 aa). A helical transmembrane segment spans residues 109–129; the sequence is LMLLLRILTIVAVGVVIFVLF. The Cytoplasmic segment spans residues 130–652; sequence RRFGPSSIGT…RAAKPQIDRT (523 aa). Residue 200 to 207 participates in ATP binding; the sequence is GPPGTGKT. His420 lines the Zn(2+) pocket. Residue Glu421 is part of the active site. Positions 424 and 496 each coordinate Zn(2+).

It in the central section; belongs to the AAA ATPase family. This sequence in the C-terminal section; belongs to the peptidase M41 family. As to quaternary structure, homohexamer. Requires Zn(2+) as cofactor.

The protein resides in the cell membrane. In terms of biological role, acts as a processive, ATP-dependent zinc metallopeptidase for both cytoplasmic and membrane proteins. Plays a role in the quality control of integral membrane proteins. In Sphaerobacter thermophilus (strain ATCC 49802 / DSM 20745 / KCCM 41009 / NCIMB 13125 / S 6022), this protein is ATP-dependent zinc metalloprotease FtsH 2.